The chain runs to 392 residues: GTPase Obg (392 aa).

Residues 1–159 (MKFVDEATIL…RDLQLELMLL (159 aa)) enclose the Obg domain. The tract at residues 127–146 (NTRFKSSVNRTPRQKTMGTP) is disordered. Residues 129-143 (RFKSSVNRTPRQKTM) show a composition bias toward polar residues. In terms of domain architecture, OBG-type G spans 160–333 (ADVGMLGLPN…LCWDVMAFIK (174 aa)). GTP contacts are provided by residues 166–173 (GLPNAGKS), 191–195 (FTTLV), 213–216 (DIPG), 283–286 (NKVD), and 314–316 (SAA). Residues S173 and T193 each contribute to the Mg(2+) site. Residues 360 to 392 (QLEEAQPEVEEDDDWDDDWDEDDEEGVETIYQR) form a disordered region. Acidic residues predominate over residues 364–386 (AQPEVEEDDDWDDDWDEDDEEGV).

Belongs to the TRAFAC class OBG-HflX-like GTPase superfamily. OBG GTPase family. As to quaternary structure, monomer. Mg(2+) serves as cofactor.

It localises to the cytoplasm. Functionally, an essential GTPase which binds GTP, GDP and possibly (p)ppGpp with moderate affinity, with high nucleotide exchange rates and a fairly low GTP hydrolysis rate. Plays a role in control of the cell cycle, stress response, ribosome biogenesis and in those bacteria that undergo differentiation, in morphogenesis control. The polypeptide is GTPase Obg (Erwinia tasmaniensis (strain DSM 17950 / CFBP 7177 / CIP 109463 / NCPPB 4357 / Et1/99)).